The sequence spans 121 residues: Met-lysine-1b (121 aa).

Positions 1-22 are cleaved as a signal peptide; the sequence is MKSFVFALALIVAFACISESKS. Residues 23 to 69 constitute a propeptide that is removed on maturation; that stretch reads DHTGYEEEENLEDSELTDLVAAALLEELAEASEMDDLSYTEEAGGER. Met120 carries the post-translational modification Methionine amide.

As to expression, expressed by the venom gland.

It localises to the secreted. Shows no antimicrobial activity against Gram-positive bacterium B.subtilis B-501 or Gram-negative bacterium E.coli DH5-alpha at concentrations up to 20 ug/ml. Shows no toxicity towards insect (S.carnaria) larvae. The polypeptide is Met-lysine-1b (Lachesana tarabaevi (Spider)).